A 389-amino-acid polypeptide reads, in one-letter code: Phospho-N-acetylmuramoyl-pentapeptide-transferase (389 aa).

A run of 10 helical transmembrane segments spans residues 25 to 45 (RAVM…PWVI), 74 to 94 (MGGV…CDWG), 97 to 117 (FIWV…VDDY), 134 to 154 (FFWQ…SVSE), 190 to 210 (ISYP…IVGS), 222 to 242 (GLVI…AYVM), 259 to 279 (AGEL…FLWF), 286 to 306 (VFMG…VAVI), 311 to 331 (IVLF…MAQV), and 366 to 386 (QVTV…LSTL).

Belongs to the glycosyltransferase 4 family. MraY subfamily. Mg(2+) serves as cofactor.

It is found in the cell inner membrane. The enzyme catalyses UDP-N-acetyl-alpha-D-muramoyl-L-alanyl-gamma-D-glutamyl-meso-2,6-diaminopimeloyl-D-alanyl-D-alanine + di-trans,octa-cis-undecaprenyl phosphate = di-trans,octa-cis-undecaprenyl diphospho-N-acetyl-alpha-D-muramoyl-L-alanyl-D-glutamyl-meso-2,6-diaminopimeloyl-D-alanyl-D-alanine + UMP. It functions in the pathway cell wall biogenesis; peptidoglycan biosynthesis. Functionally, catalyzes the initial step of the lipid cycle reactions in the biosynthesis of the cell wall peptidoglycan: transfers peptidoglycan precursor phospho-MurNAc-pentapeptide from UDP-MurNAc-pentapeptide onto the lipid carrier undecaprenyl phosphate, yielding undecaprenyl-pyrophosphoryl-MurNAc-pentapeptide, known as lipid I. This Cupriavidus necator (strain ATCC 17699 / DSM 428 / KCTC 22496 / NCIMB 10442 / H16 / Stanier 337) (Ralstonia eutropha) protein is Phospho-N-acetylmuramoyl-pentapeptide-transferase.